The following is a 327-amino-acid chain: Flotillin-like protein FloA (327 aa).

Residues 7-27 (FLVPILIVILLLVFFSLVPVG) form a helical membrane-spanning segment.

The protein belongs to the flotillin-like FloA family. As to quaternary structure, homooligomerizes.

Its subcellular location is the cell membrane. The protein resides in the membrane raft. Its function is as follows. Found in functional membrane microdomains (FMM) that may be equivalent to eukaryotic membrane rafts. FMMs are highly dynamic and increase in number as cells age. Flotillins are thought to be important factors in membrane fluidity. In Finegoldia magna (strain ATCC 29328 / DSM 20472 / WAL 2508) (Peptostreptococcus magnus), this protein is Flotillin-like protein FloA.